We begin with the raw amino-acid sequence, 93 residues long: Small ribosomal subunit protein uS19 (93 aa).

Belongs to the universal ribosomal protein uS19 family.

Functionally, protein S19 forms a complex with S13 that binds strongly to the 16S ribosomal RNA. The protein is Small ribosomal subunit protein uS19 of Ehrlichia canis (strain Jake).